A 302-amino-acid chain; its full sequence is Protein translocase subunit SecF (302 aa).

6 helical membrane passes run 12–32 (FFIY…FVKG), 138–158 (YAWY…TIRF), 166–186 (AILA…LFGI), 190–210 (LTAI…TIVV), 249–269 (FLVV…FAFG), and 272–292 (VGVI…VIGM).

It belongs to the SecD/SecF family. SecF subfamily. As to quaternary structure, forms a complex with SecD. Part of the essential Sec protein translocation apparatus which comprises SecA, SecYEG and auxiliary proteins SecDF. Other proteins may also be involved.

It is found in the cell inner membrane. Its function is as follows. Part of the Sec protein translocase complex. Interacts with the SecYEG preprotein conducting channel. SecDF uses the proton motive force (PMF) to complete protein translocation after the ATP-dependent function of SecA. This chain is Protein translocase subunit SecF, found in Petrotoga mobilis (strain DSM 10674 / SJ95).